The chain runs to 462 residues: PTS system mannitol-specific cryptic EIICB component (462 aa).

Residues 1 to 24 are Cytoplasmic-facing; the sequence is MENKSARAKVQAFGGFLTAMVIPN. Residues 13 to 344 form the PTS EIIC type-2 domain; the sequence is FGGFLTAMVI…LKMEKTVETE (332 aa). Residues 25-46 form a helical membrane-spanning segment; it reads IGAFIAWGFITALFIPTGWLPN. Over 47–50 the chain is Periplasmic; it reads EHFA. Residues 51–71 traverse the membrane as a helical segment; sequence KIVGPMITYLLPVMIGSTGGH. The Cytoplasmic segment spans residues 72-134; that stretch reads LVGGKRGAVM…AGFEMVINNF (63 aa). The helical transmembrane segment at 135 to 156 threads the bilayer; the sequence is SLGIAGMLLCLLGFEVIGPAVL. Residues 157–165 lie on the Periplasmic side of the membrane; that stretch reads IANTFVKEC. A helical transmembrane segment spans residues 166 to 186; sequence IEALVHAGYLPLLSVINEPAK. Over 187 to 273 the chain is Cytoplasmic; the sequence is VLFLNNAIDQ…VLMKPLTIIA (87 aa). Residues 274 to 293 form a helical membrane-spanning segment; the sequence is MIAGGMSGTWMFNLLDGGLV. The Periplasmic segment spans residues 294–313; the sequence is AGPSPGSIFAYLALTPKGSF. A helical transmembrane segment spans residues 314–335; sequence LATIAGVTVGTLVSFAITSLIL. Over 336–462 the chain is Cytoplasmic; the sequence is KMEKTVETES…FNQLTAEHKH (127 aa). Residues 371-461 form the PTS EIIB type-2 domain; the sequence is KRIAFVCDAG…LFNQLTAEHK (91 aa). Cysteine 377 serves as the catalytic Phosphocysteine intermediate; for EIIB activity. A Phosphocysteine; by EIIA modification is found at cysteine 377.

It localises to the cell inner membrane. The enzyme catalyses D-mannitol(out) + N(pros)-phospho-L-histidyl-[protein] = D-mannitol 1-phosphate(in) + L-histidyl-[protein]. The phosphoenolpyruvate-dependent sugar phosphotransferase system (sugar PTS), a major carbohydrate active transport system, catalyzes the phosphorylation of incoming sugar substrates concomitantly with their translocation across the cell membrane. The enzyme II CmtAB PTS system is involved in D-mannitol transport. This is PTS system mannitol-specific cryptic EIICB component (cmtA) from Escherichia coli O157:H7.